Reading from the N-terminus, the 469-residue chain is L-seryl-tRNA(Sec) selenium transferase (469 aa).

K298 carries the N6-(pyridoxal phosphate)lysine modification.

Belongs to the SelA family. It depends on pyridoxal 5'-phosphate as a cofactor.

It localises to the cytoplasm. The catalysed reaction is L-seryl-tRNA(Sec) + selenophosphate + H(+) = L-selenocysteinyl-tRNA(Sec) + phosphate. It functions in the pathway aminoacyl-tRNA biosynthesis; selenocysteinyl-tRNA(Sec) biosynthesis; selenocysteinyl-tRNA(Sec) from L-seryl-tRNA(Sec) (bacterial route): step 1/1. Converts seryl-tRNA(Sec) to selenocysteinyl-tRNA(Sec) required for selenoprotein biosynthesis. In Nitratidesulfovibrio vulgaris (strain ATCC 29579 / DSM 644 / CCUG 34227 / NCIMB 8303 / VKM B-1760 / Hildenborough) (Desulfovibrio vulgaris), this protein is L-seryl-tRNA(Sec) selenium transferase.